Here is a 467-residue protein sequence, read N- to C-terminus: Fumarate hydratase class II (467 aa).

Residues 98–100 (SGT), arginine 126, 129–132 (HPND), 139–141 (SSN), and threonine 187 contribute to the substrate site. The active-site Proton donor/acceptor is the histidine 188. The active site involves serine 318. Substrate-binding positions include serine 319 and 324–326 (KVN).

It belongs to the class-II fumarase/aspartase family. Fumarase subfamily. Homotetramer.

It is found in the cytoplasm. The enzyme catalyses (S)-malate = fumarate + H2O. The protein operates within carbohydrate metabolism; tricarboxylic acid cycle; (S)-malate from fumarate: step 1/1. Its function is as follows. Involved in the TCA cycle. Catalyzes the stereospecific interconversion of fumarate to L-malate. The protein is Fumarate hydratase class II of Salmonella typhi.